We begin with the raw amino-acid sequence, 429 residues long: Adenylosuccinate synthetase (429 aa).

GTP-binding positions include 12 to 18 (GDEGKGK) and 40 to 42 (GHT). The active-site Proton acceptor is the aspartate 13. Mg(2+) contacts are provided by aspartate 13 and glycine 40. IMP-binding positions include 13 to 16 (DEGK), 38 to 41 (NAGH), threonine 129, arginine 143, glutamine 223, threonine 238, and arginine 302. The active-site Proton donor is histidine 41. 298-304 (VVTGRKR) contributes to the substrate binding site. GTP contacts are provided by residues arginine 304, 330 to 332 (KLD), and 412 to 414 (STS).

It belongs to the adenylosuccinate synthetase family. Homodimer. The cofactor is Mg(2+).

The protein resides in the cytoplasm. The enzyme catalyses IMP + L-aspartate + GTP = N(6)-(1,2-dicarboxyethyl)-AMP + GDP + phosphate + 2 H(+). It participates in purine metabolism; AMP biosynthesis via de novo pathway; AMP from IMP: step 1/2. Functionally, plays an important role in the de novo pathway of purine nucleotide biosynthesis. Catalyzes the first committed step in the biosynthesis of AMP from IMP. This chain is Adenylosuccinate synthetase, found in Brucella anthropi (strain ATCC 49188 / DSM 6882 / CCUG 24695 / JCM 21032 / LMG 3331 / NBRC 15819 / NCTC 12168 / Alc 37) (Ochrobactrum anthropi).